We begin with the raw amino-acid sequence, 406 residues long: Indole-3-pyruvate monooxygenase YUCCA1 (406 aa).

21-26 is a binding site for FAD; the sequence is GAGPSG. 184-189 serves as a coordination point for NADP(+); it reads GCGNSG.

This sequence belongs to the FMO family. FAD is required as a cofactor. In terms of tissue distribution, expressed in coleoptile tips, root tips, leaf blade tips, shoot apical meristem, vasculature of stems and flowers.

The enzyme catalyses indole-3-pyruvate + NADPH + O2 + H(+) = (indol-3-yl)acetate + CO2 + NADP(+) + H2O. In terms of biological role, involved in auxin biosynthesis. Converts the indole-3-pyruvic acid (IPA) produced by the TAA family to indole-3-acetic acid (IAA). Functions downstream of TAR2 in auxin biosynthesis. Functions upstream of WOX11, a transcription factor that promotes the development of crown roots. The sequence is that of Indole-3-pyruvate monooxygenase YUCCA1 from Oryza sativa subsp. japonica (Rice).